A 447-amino-acid polypeptide reads, in one-letter code: Chordin-like protein 1 (447 aa).

Residues 1-22 form the signal peptide; the sequence is MEGIKYIASLVFFFVFLEASKT. 2 consecutive VWFC domains span residues 30 to 95 and 108 to 174; these read TYCM…PRCP and KSCE…RVCR. An N-linked (GlcNAc...) asparagine glycan is attached at asparagine 113. The Cell attachment site signature appears at 174–176; sequence RGD. Residues 199–219 form a disordered region; that stretch reads HSYLRSPYDPPPSRQAGGLPR. The VWFC 3 domain maps to 253 to 318; that stretch reads QVCVSNGKTY…LDGKCCKVCP (66 aa). A glycan (N-linked (GlcNAc...) asparagine) is linked at asparagine 286.

It localises to the secreted. Seems to antagonize the function of BMP4 by binding to it and preventing its interaction with receptors. Alters the fate commitment of neural stem cells from gliogenesis to neurogenesis. Contributes to neuronal differentiation of neural stem cells in the brain by preventing the adoption of a glial fate. May play a crucial role in dorsoventral axis formation. May play a role in embryonic bone formation. Plays a role during anterior segment eye development. In Rattus norvegicus (Rat), this protein is Chordin-like protein 1 (Chrdl1).